A 328-amino-acid chain; its full sequence is MQQVISHSLPRRHNNILQVFKSYYQLTKPRIILLLLITTAAGMWLGAKGEVSLFLLFVTLTGGALASGAANAINCIYDSDIDYIMERTRWRPIPSGRVKPRDALIFALTLAATSFTLLTVFANLLAALLAMSGIVFYVGVYTHWLKRHSVQNIVIGGAAGAIPPLVGWAAVTGELSWAAWLLFAIIVVWTPPHFWALAIYIRDEYQEVGVPMLPVIEGNEETARQIWVYTLILIPMTLLLVYPLHVSGAIYAVLATYLGVIFIKKAWQLLKDPSNKDVARSLFKYSIYYMMLLCLVMVIDSLPFTHGITTALADSWQTFIGGAIAILF.

8 consecutive transmembrane segments (helical) span residues I31–V51, L53–I73, V120–V140, I153–G173, L181–I201, I226–V246, I250–L270, and Y285–T305.

Belongs to the UbiA prenyltransferase family. Protoheme IX farnesyltransferase subfamily.

It localises to the cell inner membrane. It catalyses the reaction heme b + (2E,6E)-farnesyl diphosphate + H2O = Fe(II)-heme o + diphosphate. It functions in the pathway porphyrin-containing compound metabolism; heme O biosynthesis; heme O from protoheme: step 1/1. In terms of biological role, converts heme B (protoheme IX) to heme O by substitution of the vinyl group on carbon 2 of heme B porphyrin ring with a hydroxyethyl farnesyl side group. This chain is Protoheme IX farnesyltransferase, found in Trichodesmium erythraeum (strain IMS101).